Reading from the N-terminus, the 298-residue chain is Olfactory receptor 5AK3 (298 aa).

The Extracellular segment spans residues 1-25 (MGRGNSTEVTEFHLLGFGVQHEFQH). N-linked (GlcNAc...) asparagine glycosylation occurs at Asn-5. Residues 26–46 (VLFIVLLLIYVTSLIGNIGMI) traverse the membrane as a helical segment. The Cytoplasmic segment spans residues 47-54 (LLIKTDSR). Residues 55–75 (LQTPMYFFPQHLAFVDICYTS) form a helical membrane-spanning segment. Residues 76–99 (AITPKMLQSFTEENNLITFRGCVI) are Extracellular-facing. An intrachain disulfide couples Cys-97 to Cys-189. Residues 100 to 120 (QFLVYATFATSDCYLLAIMAM) traverse the membrane as a helical segment. Over 121-133 (DCYVAICKPLRYP) the chain is Cytoplasmic. Residues 134 to 154 (MIMSQTVYIQLVAGSYIIGSI) form a helical membrane-spanning segment. An N-linked (GlcNAc...) asparagine glycan is attached at Asn-155. At 155–196 (NASVHTGFTFSLSFCKSNKINHFFCDGLPILALSCSNIDINI) the chain is on the extracellular side. Residues 197 to 217 (ILDVVFVGFDLMFTELVIIFS) form a helical membrane-spanning segment. Topologically, residues 218-237 (YIYIMVTILKMSSTAGRKKS) are cytoplasmic. The chain crosses the membrane as a helical span at residues 238-258 (FSTCASHLTAVTIFYGTLSYM). Residues 259 to 271 (YLQPQSNNSQENM) are Extracellular-facing. N-linked (GlcNAc...) asparagine glycosylation is present at Asn-265. Residues 272-292 (KVASIFYGTVIPMLNPLIYSL) traverse the membrane as a helical segment. At 293–298 (RNKEGK) the chain is on the cytoplasmic side.

This sequence belongs to the G-protein coupled receptor 1 family.

It localises to the cell membrane. In terms of biological role, odorant receptor. This is Olfactory receptor 5AK3 (OR5AK3P) from Homo sapiens (Human).